The chain runs to 716 residues: ATP-dependent DNA helicase DinG (716 aa).

A Helicase ATP-binding domain is found at 17–294; that stretch reads ALQEQIPDFI…TCMEQFRPKT (278 aa). 54–61 is an ATP binding site; that stretch reads APTGVGKT. Position 120 (C120) interacts with [4Fe-4S] cluster. Positions 131–134 match the DEAH box motif; that stretch reads EPTQ. Positions 194, 199, and 205 each coordinate [4Fe-4S] cluster. The short motif at 248–251 is the DEAH box element; that stretch reads DEGH. The region spanning 517–698 is the Helicase C-terminal domain; it reads HIAEMAAFFR…VFPIEQPEVP (182 aa).

The protein belongs to the helicase family. DinG subfamily. Type 1 sub-subfamily. Requires [4Fe-4S] cluster as cofactor.

It catalyses the reaction Couples ATP hydrolysis with the unwinding of duplex DNA at the replication fork by translocating in the 5'-3' direction. This creates two antiparallel DNA single strands (ssDNA). The leading ssDNA polymer is the template for DNA polymerase III holoenzyme which synthesizes a continuous strand.. The catalysed reaction is ATP + H2O = ADP + phosphate + H(+). DNA-dependent ATPase and 5'-3' DNA helicase. Unwinds D-loops, R-loops, forked DNA and G-quadruplex DNA. This Escherichia coli O6:H1 (strain CFT073 / ATCC 700928 / UPEC) protein is ATP-dependent DNA helicase DinG.